A 226-amino-acid chain; its full sequence is CD9 antigen (226 aa).

The Cytoplasmic portion of the chain corresponds to 1-12 (MPVKGGTKCIKY). The S-palmitoyl cysteine moiety is linked to residue C9. Residues 13-33 (LLFGFNFIFWLAGIAVLAVGL) traverse the membrane as a helical segment. At 34-53 (WLRFDSQTKSIFEQDSQPSS) the chain is on the extracellular side. The helical transmembrane segment at 54–74 (FYTGVYILIGAGALMMLVGFL) threads the bilayer. At 75–85 (GCCGAVQESQC) the chain is on the cytoplasmic side. 3 S-palmitoyl cysteine lipidation sites follow: C76, C77, and C85. The helical transmembrane segment at 86 to 109 (MLGLFFGFLLVIFAIEIAAAIWGY) threads the bilayer. At 110 to 193 (SHKDEVIQEV…KEVFHNKFHI (84 aa)) the chain is on the extracellular side. Cystine bridges form between C150-C179 and C151-C165. Residues 194-219 (IGAVGIGIAVVMIFGMIFSMILCCAI) traverse the membrane as a helical segment. S-palmitoyl cysteine attachment occurs at residues C216 and C217. The Cytoplasmic portion of the chain corresponds to 220 to 226 (RRSREMV).

This sequence belongs to the tetraspanin (TM4SF) family. In terms of assembly, forms both disulfide-linked homodimers and higher homooligomers as well as heterooligomers with other members of the tetraspanin family. Interacts (via the second extracellular domain) with integrin ITGAV:ITGB3. Interacts with integrin ITGA6:ITGB1; interaction takes place in oocytes and is involved in sperm-egg fusion. Part of integrin-tetraspanin complexes composed of CD81, beta-1 and beta-2 integrins in the membrane of monocyte/macrophages. Interacts with CD63; identified in a complex with CD63 and ITGB3. Associates with CR2/CD21 and with PTGFRN/CD9P1. Part of a complex composed of CD9, CD81, PTGFRN and IGSF8. Interacts directly with IGSF8. Interacts with PDPN; this interaction is homophilic and attenuates platelet aggregation and pulmonary metastasis induced by PDPN. Interacts (on T cell side) with CD81 at immunological synapses between antigen-presenting cells and T cells. In terms of processing, palmitoylated at a low, basal level in unstimulated platelets. The level of palmitoylation increases when platelets are activated by thrombin (in vitro). The protein exists in three forms with molecular masses between 22 and 27 kDa, and is known to carry covalently linked fatty acids. Palmitoylation by ZDHHC2 regulates CD9 expression, association with other tetraspanin family proteins and function in cell adhesion.

The protein localises to the cell membrane. The protein resides in the membrane. Its subcellular location is the secreted. It localises to the extracellular exosome. Integral membrane protein associated with integrins, which regulates different processes, such as sperm-egg fusion, platelet activation and aggregation, and cell adhesion. Present at the cell surface of oocytes and plays a key role in sperm-egg fusion, possibly by organizing multiprotein complexes and the morphology of the membrane required for the fusion. In myoblasts, associates with CD81 and PTGFRN and inhibits myotube fusion during muscle regeneration. In macrophages, associates with CD81 and beta-1 and beta-2 integrins, and prevents macrophage fusion into multinucleated giant cells specialized in ingesting complement-opsonized large particles. Also prevents the fusion between mononuclear cell progenitors into osteoclasts in charge of bone resorption. Acts as a receptor for PSG17. Involved in platelet activation and aggregation. Regulates paranodal junction formation. Involved in cell adhesion, cell motility and tumor metastasis. The sequence is that of CD9 antigen from Felis catus (Cat).